The following is a 174-amino-acid chain: RNA pyrophosphohydrolase (174 aa).

The Nudix hydrolase domain occupies 14–167 (PYRPCVGLMV…KRKVYEEVVA (154 aa)). The short motif at 55–76 (GGIDKGEEPLEAAIRELYEETG) is the Nudix box element.

The protein belongs to the Nudix hydrolase family. RppH subfamily. It depends on a divalent metal cation as a cofactor.

Functionally, accelerates the degradation of transcripts by removing pyrophosphate from the 5'-end of triphosphorylated RNA, leading to a more labile monophosphorylated state that can stimulate subsequent ribonuclease cleavage. This chain is RNA pyrophosphohydrolase, found in Brucella anthropi (strain ATCC 49188 / DSM 6882 / CCUG 24695 / JCM 21032 / LMG 3331 / NBRC 15819 / NCTC 12168 / Alc 37) (Ochrobactrum anthropi).